The primary structure comprises 558 residues: Glucose-6-phosphate isomerase (558 aa).

Ala2 carries the post-translational modification N-acetylalanine. Lys12 is modified (N6-acetyllysine). N6-(2-hydroxyisobutyryl)lysine is present on Lys34. A Phosphoserine modification is found at Ser107. Position 109 is a phosphothreonine (Thr109). At Lys142 the chain carries N6-acetyllysine. 159–160 (GS) contacts D-glucose 6-phosphate. A Phosphoserine; by CK2 modification is found at Ser185. 210-215 (SKTFTT) is a D-glucose 6-phosphate binding site. Residue Thr250 is modified to Phosphothreonine. D-glucose 6-phosphate contacts are provided by Gln354, Glu358, and His389. The active-site Proton donor is Glu358. The active site involves His389. Lys454 bears the N6-acetyllysine; alternate mark. Position 454 is an N6-malonyllysine; alternate (Lys454). Residue Lys454 is modified to N6-succinyllysine; alternate. Residue Ser455 is modified to Phosphoserine. D-glucose 6-phosphate is bound at residue Lys519. Lys519 is an active-site residue.

The protein belongs to the GPI family. As to quaternary structure, homodimer; in the catalytically active form. Monomer in the secreted form. In terms of processing, phosphorylation at Ser-185 by CK2 has been shown to decrease enzymatic activity and may contribute to secretion by a non-classical secretory pathway. ISGylated.

It localises to the cytoplasm. It is found in the secreted. It catalyses the reaction alpha-D-glucose 6-phosphate = beta-D-fructose 6-phosphate. It participates in carbohydrate degradation; glycolysis; D-glyceraldehyde 3-phosphate and glycerone phosphate from D-glucose: step 2/4. In the cytoplasm, catalyzes the conversion of glucose-6-phosphate to fructose-6-phosphate, the second step in glycolysis, and the reverse reaction during gluconeogenesis. Besides it's role as a glycolytic enzyme, also acts as a secreted cytokine: acts as an angiogenic factor (AMF) that stimulates endothelial cell motility. Acts as a neurotrophic factor, neuroleukin, for spinal and sensory neurons. It is secreted by lectin-stimulated T-cells and induces immunoglobulin secretion. The protein is Glucose-6-phosphate isomerase of Macaca fascicularis (Crab-eating macaque).